The primary structure comprises 104 residues: MKKIRKGDRVVILSGNDKGRSGEVIKVNPGESKALVRGINMVKRHQRQTQKQEAGIISKEAPIHLSNLAIADPKDGKPTRVGFRMNADGGKVRFAKRSGELIDG.

The protein belongs to the universal ribosomal protein uL24 family. As to quaternary structure, part of the 50S ribosomal subunit.

In terms of biological role, one of two assembly initiator proteins, it binds directly to the 5'-end of the 23S rRNA, where it nucleates assembly of the 50S subunit. One of the proteins that surrounds the polypeptide exit tunnel on the outside of the subunit. The polypeptide is Large ribosomal subunit protein uL24 (Bartonella bacilliformis (strain ATCC 35685 / KC583 / Herrer 020/F12,63)).